A 210-amino-acid chain; its full sequence is Beta-crystallin A4 (210 aa).

The segment at 1–25 is N-terminal arm; the sequence is MSGMFSGSISETSGMSLQCTKSAGH. 2 consecutive Beta/gamma crystallin 'Greek key' domains span residues 26-65 and 66-112; these read WKIV…KVLS and GAWV…RPVA. The tract at residues 113–118 is connecting peptide; that stretch reads CANHRD. 2 consecutive Beta/gamma crystallin 'Greek key' domains span residues 119-160 and 161-209; these read SRLT…HVHS and GAWV…RRIQ.

The protein belongs to the beta/gamma-crystallin family. Homo/heterodimer, or complexes of higher-order. The structure of beta-crystallin oligomers seems to be stabilized through interactions between the N-terminal arms.

Its function is as follows. Crystallins are the dominant structural components of the vertebrate eye lens. The protein is Beta-crystallin A4 (CRYBA4) of Bos taurus (Bovine).